The sequence spans 639 residues: MAU2 chromatid cohesion factor homolog (639 aa).

2 TPR repeats span residues 453–486 (GGFY…ANAE) and 493–526 (SCSL…ASKI).

The protein belongs to the SCC4/mau-2 family. In terms of assembly, interacts with Nipped-B to form the cohesin loading complex.

It localises to the nucleus. It is found in the nucleoplasm. Required for association of the cohesin complex with chromatin during interphase. Plays a role in sister chromatid cohesion and normal progression through prometaphase. The polypeptide is MAU2 chromatid cohesion factor homolog (Drosophila ananassae (Fruit fly)).